The sequence spans 108 residues: Nucleoid-associated protein HEAR1046 (108 aa).

Residues 86 to 108 (TSQEKMAGATAGMPMPPGFKMPF) are disordered. The span at 99–108 (PMPPGFKMPF) shows a compositional bias: pro residues.

This sequence belongs to the YbaB/EbfC family. As to quaternary structure, homodimer.

The protein localises to the cytoplasm. It localises to the nucleoid. Its function is as follows. Binds to DNA and alters its conformation. May be involved in regulation of gene expression, nucleoid organization and DNA protection. This is Nucleoid-associated protein HEAR1046 from Herminiimonas arsenicoxydans.